The following is a 549-amino-acid chain: Glucose-6-phosphate isomerase (549 aa).

Catalysis depends on Glu353, which acts as the Proton donor. Active-site residues include His384 and Lys513.

The protein belongs to the GPI family.

It localises to the cytoplasm. The enzyme catalyses alpha-D-glucose 6-phosphate = beta-D-fructose 6-phosphate. The protein operates within carbohydrate biosynthesis; gluconeogenesis. It functions in the pathway carbohydrate degradation; glycolysis; D-glyceraldehyde 3-phosphate and glycerone phosphate from D-glucose: step 2/4. Catalyzes the reversible isomerization of glucose-6-phosphate to fructose-6-phosphate. This chain is Glucose-6-phosphate isomerase, found in Bartonella bacilliformis (strain ATCC 35685 / KC583 / Herrer 020/F12,63).